Here is a 55-residue protein sequence, read N- to C-terminus: Large ribosomal subunit protein bL33 (55 aa).

It belongs to the bacterial ribosomal protein bL33 family.

The chain is Large ribosomal subunit protein bL33 from Mesorhizobium japonicum (strain LMG 29417 / CECT 9101 / MAFF 303099) (Mesorhizobium loti (strain MAFF 303099)).